The primary structure comprises 229 residues: Large ribosomal subunit protein uL1 (229 aa).

The protein belongs to the universal ribosomal protein uL1 family. As to quaternary structure, part of the 50S ribosomal subunit.

In terms of biological role, binds directly to 23S rRNA. The L1 stalk is quite mobile in the ribosome, and is involved in E site tRNA release. Its function is as follows. Protein L1 is also a translational repressor protein, it controls the translation of the L11 operon by binding to its mRNA. This Clostridium beijerinckii (strain ATCC 51743 / NCIMB 8052) (Clostridium acetobutylicum) protein is Large ribosomal subunit protein uL1.